We begin with the raw amino-acid sequence, 402 residues long: CMP-sialic acid transporter 3 (402 aa).

Residues 1–42 (MSGEVECRVCHAKVQVPMAAAAVSKAYDIHRSSVSSRQRALN) lie on the Cytoplasmic side of the membrane. Residues 43–63 (VLLVSGDCVLAGLQPILVYMC) form a helical membrane-spanning segment. At 64–73 (KVDGKFKFSP) the chain is on the lumenal side. Residues 74–94 (VSVNFLTEITKIIFAIIMLCI) form a helical membrane-spanning segment. Residues 95 to 118 (QARRLKVGEKPFLTVSTFMQAARN) are Cytoplasmic-facing. A helical transmembrane segment spans residues 119–139 (NVLLAVPALFYAINNYMKFVM). Over 140–146 (QLYFNPA) the chain is Lumenal. Residues 147–167 (TVKMLGNLKVLVIAVLLKVIM) traverse the membrane as a helical segment. Over 168 to 170 (RRR) the chain is Cytoplasmic. A helical transmembrane segment spans residues 171–191 (FSTIQWEALALLLIGISVNQL). Topologically, residues 192–202 (KSLPEGSSTLG) are lumenal. A helical transmembrane segment spans residues 203–223 (LPVAAGAYLYTLFFVTVPALA). Over 224 to 243 (SVYNEKALKSQFDTSIYLQN) the chain is Cytoplasmic. The helical transmembrane segment at 244 to 264 (LFLYGYGAIFNFLGLVITAII) threads the bilayer. The Lumenal portion of the chain corresponds to 265–280 (QGPSSFNILEGHSKAT). Residues 281 to 301 (MFLICNNAAQGILSSFFFKYA) traverse the membrane as a helical segment. Topologically, residues 302 to 321 (DTILKKYSSTIATIFTGVAS) are cytoplasmic. Residues 322-342 (AVLFGHTLTINFVLAISIVII) form a helical membrane-spanning segment. At 343–402 (SMHQYLSNQIKDEVPSSKIEMGDAHEHRSKESVVVNVSDSIATEAKHRHGTDERQPLLPV) the chain is on the lumenal side.

It belongs to the nucleotide-sugar transporter family. CMP-Sialate:CMP antiporter (TC 2.A.7.12) subfamily.

The protein localises to the golgi apparatus membrane. Its function is as follows. Sugar transporter involved in the transport of CMP-sialic acid from the cytoplasm into the Golgi. May transport important nucleotide sugars such as CMP-Kdo (2-keto-3-deoxy-D-manno-octulosonic acid) in physiological conditions. The polypeptide is CMP-sialic acid transporter 3 (Oryza sativa subsp. indica (Rice)).